A 146-amino-acid polypeptide reads, in one-letter code: uncharacterized protein (146 aa).

This is an uncharacterized protein from Acidianus filamentous virus 1 (isolate United States/Yellowstone) (AFV-1).